The sequence spans 376 residues: Erythronate-4-phosphate dehydrogenase (376 aa).

Ser45 and Thr67 together coordinate substrate. Residue Asp147 coordinates NAD(+). Arg209 is an active-site residue. Asp233 provides a ligand contact to NAD(+). Glu238 is an active-site residue. His255 (proton donor) is an active-site residue. Gly258 contacts NAD(+). Residue Tyr259 participates in substrate binding.

It belongs to the D-isomer specific 2-hydroxyacid dehydrogenase family. PdxB subfamily. As to quaternary structure, homodimer.

It localises to the cytoplasm. The catalysed reaction is 4-phospho-D-erythronate + NAD(+) = (R)-3-hydroxy-2-oxo-4-phosphooxybutanoate + NADH + H(+). Its pathway is cofactor biosynthesis; pyridoxine 5'-phosphate biosynthesis; pyridoxine 5'-phosphate from D-erythrose 4-phosphate: step 2/5. Functionally, catalyzes the oxidation of erythronate-4-phosphate to 3-hydroxy-2-oxo-4-phosphonooxybutanoate. This Shewanella sp. (strain ANA-3) protein is Erythronate-4-phosphate dehydrogenase.